Reading from the N-terminus, the 418-residue chain is Putative ion-transport protein YfeO (418 aa).

A run of 12 helical transmembrane segments spans residues 10–30, 54–74, 99–119, 120–140, 149–169, 186–206, 223–243, 258–278, 300–320, 322–342, 343–363, and 371–391; these read LLLS…LIVV, DSPF…GLVI, ALPG…SLGP, EHPI…RLLP, ILAS…AALI, LFAP…FFHP, ILSG…AVWC, VLML…AGPV, DYFL…ASGF, GGRI…LHEH, VPAV…VLVV, and LFMA…CIVM.

Belongs to the chloride channel (TC 2.A.49) family.

The protein localises to the cell membrane. The sequence is that of Putative ion-transport protein YfeO from Escherichia coli (strain SMS-3-5 / SECEC).